Here is a 523-residue protein sequence, read N- to C-terminus: 2-isopropylmalate synthase (523 aa).

The 263-residue stretch at 5–267 folds into the Pyruvate carboxyltransferase domain; sequence VIIFDTTLRD…ETGINAKEIH (263 aa). Mn(2+) contacts are provided by Asp14, His202, His204, and Asn238. Residues 392–523 form a regulatory domain region; sequence KLQQLVVHSD…QQEKQVLGGV (132 aa).

This sequence belongs to the alpha-IPM synthase/homocitrate synthase family. LeuA type 1 subfamily. Homodimer. The cofactor is Mn(2+).

The protein resides in the cytoplasm. It carries out the reaction 3-methyl-2-oxobutanoate + acetyl-CoA + H2O = (2S)-2-isopropylmalate + CoA + H(+). It participates in amino-acid biosynthesis; L-leucine biosynthesis; L-leucine from 3-methyl-2-oxobutanoate: step 1/4. Its function is as follows. Catalyzes the condensation of the acetyl group of acetyl-CoA with 3-methyl-2-oxobutanoate (2-ketoisovalerate) to form 3-carboxy-3-hydroxy-4-methylpentanoate (2-isopropylmalate). In Shewanella piezotolerans (strain WP3 / JCM 13877), this protein is 2-isopropylmalate synthase.